We begin with the raw amino-acid sequence, 86 residues long: Maxadilan (86 aa).

The first 23 residues, Met-1–Gly-23, serve as a signal peptide directing secretion. 2 disulfides stabilise this stretch: Cys-24–Cys-28 and Cys-37–Cys-74.

As to quaternary structure, interacts with human ADCYAP1R1. Salivary gland (at protein level).

It localises to the secreted. Potent vasodilator. Activates mammalian ADCYAP1R1, a PAC1 receptor, and induces cAMP accumulation in host cells. Causes the development of erythema following superficial injection into the rabbit or human skin. Influences adaptive immune responses mediated by host dendritic cells. Reduces surface expression of CD80 on host dendritic cells stimulated with lipopolysaccharides (LPS) and induces concomitant increase in CD86 expression on a subpopulation of these cells. Redirects cytokine secretion by LPS-activated host dendritic cells toward type 2 responses: decreases secretion of TNF-alpha/TNF, IL-12p40/IL12B and IFN-gamma/IFNG, and increases secretion of IL6 and IL10. Reduces ability of host bone marrow-derived dendritic cells to stimulate proliferation of CD4(+) T-cells. Reprograms the effect of LPS-activated host dendritic cells on cytokine secretion profiles in host T-cells: decreases secretion of TNF-alpha/TNF and IFN-gamma/IFNG, increases secretion of IL6 and IL13, and increases secretion of pro-inflammatory cytokine IL-1beta/IL1B in mixed lymphocyte reaction (MLR) cultures. Reduces LPS-induced up-regulation of CCR7 in activated host dendritic cells. Inhibits IFN-gamma/IFNG and IL-12p40/IL12B production by human peripheral blood mononuclear cells. Increases IL6 and decreases TNF-alpha/TNF production by LPS-stimulated human monocytes. Functionally, (Microbial infection) Probably plays a critical role in the enhancement of Leishmania infectivity in the host attributed to sand fly saliva. This chain is Maxadilan, found in Lutzomyia longipalpis (Sand fly).